The chain runs to 306 residues: ATP-dependent (S)-NAD(P)H-hydrate dehydratase (306 aa).

Residues 4 to 300 (LIDLFKPMIP…NQISNGFEDL (297 aa)) enclose the YjeF C-terminal domain. Residues Gly104 and 157 to 163 (NFVEFKS) each bind (6S)-NADPHX. ATP-binding positions include 197-201 (KGKED) and 216-225 (GMPRRCGGQG). (6S)-NADPHX is bound at residue Asp226.

The protein belongs to the NnrD/CARKD family. It depends on Mg(2+) as a cofactor.

The catalysed reaction is (6S)-NADHX + ATP = ADP + phosphate + NADH + H(+). It catalyses the reaction (6S)-NADPHX + ATP = ADP + phosphate + NADPH + H(+). In terms of biological role, catalyzes the dehydration of the S-form of NAD(P)HX at the expense of ATP, which is converted to ADP. Together with NAD(P)HX epimerase, which catalyzes the epimerization of the S- and R-forms, the enzyme allows the repair of both epimers of NAD(P)HX, a damaged form of NAD(P)H that is a result of enzymatic or heat-dependent hydration. The protein is ATP-dependent (S)-NAD(P)H-hydrate dehydratase of Dictyostelium discoideum (Social amoeba).